A 326-amino-acid polypeptide reads, in one-letter code: Undecaprenyl-phosphate 4-deoxy-4-formamido-L-arabinose transferase (326 aa).

Topologically, residues 1 to 235 (MFEIHPIKKV…TCLTTTPLRM (235 aa)) are cytoplasmic. The chain crosses the membrane as a helical span at residues 236 to 256 (LSLLGSIIATSGFSLAILLVV). At 257 to 269 (LRLAFGSQWSGEG) the chain is on the periplasmic side. Residues 270 to 290 (VFMLFAVLFTFIGAQFIGMGL) form a helical membrane-spanning segment. The Cytoplasmic segment spans residues 291–326 (LGEYIGRIYNDVRARPRYFVQKVIRPASSIDIEENH).

Belongs to the glycosyltransferase 2 family.

Its subcellular location is the cell inner membrane. The catalysed reaction is UDP-4-deoxy-4-formamido-beta-L-arabinose + di-trans,octa-cis-undecaprenyl phosphate = 4-deoxy-4-formamido-alpha-L-arabinopyranosyl di-trans,octa-cis-undecaprenyl phosphate + UDP. It participates in glycolipid biosynthesis; 4-amino-4-deoxy-alpha-L-arabinose undecaprenyl phosphate biosynthesis; 4-amino-4-deoxy-alpha-L-arabinose undecaprenyl phosphate from UDP-4-deoxy-4-formamido-beta-L-arabinose and undecaprenyl phosphate: step 1/2. The protein operates within bacterial outer membrane biogenesis; lipopolysaccharide biosynthesis. In terms of biological role, catalyzes the transfer of 4-deoxy-4-formamido-L-arabinose from UDP to undecaprenyl phosphate. The modified arabinose is attached to lipid A and is required for resistance to polymyxin and cationic antimicrobial peptides. In Escherichia fergusonii (strain ATCC 35469 / DSM 13698 / CCUG 18766 / IAM 14443 / JCM 21226 / LMG 7866 / NBRC 102419 / NCTC 12128 / CDC 0568-73), this protein is Undecaprenyl-phosphate 4-deoxy-4-formamido-L-arabinose transferase.